Reading from the N-terminus, the 659-residue chain is UvrABC system protein B (659 aa).

In terms of domain architecture, Helicase ATP-binding spans 25 to 414 (EGVRRGAREQ…PSLVVEQIVR (390 aa)). 38–45 (GATGTGKT) provides a ligand contact to ATP. Positions 91–114 (YYDYYQPEAYIPTTDTYIEKDALI) match the Beta-hairpin motif. The Helicase C-terminal domain occupies 431-597 (QIDDLYAEIR…TIVKPVRDVI (167 aa)). A UVR domain is found at 620–655 (PKVVAKLRKEMMQAAKDLDFERAAEIRDIIFELEKK).

This sequence belongs to the UvrB family. In terms of assembly, forms a heterotetramer with UvrA during the search for lesions. Interacts with UvrC in an incision complex.

The protein localises to the cytoplasm. Its function is as follows. The UvrABC repair system catalyzes the recognition and processing of DNA lesions. A damage recognition complex composed of 2 UvrA and 2 UvrB subunits scans DNA for abnormalities. Upon binding of the UvrA(2)B(2) complex to a putative damaged site, the DNA wraps around one UvrB monomer. DNA wrap is dependent on ATP binding by UvrB and probably causes local melting of the DNA helix, facilitating insertion of UvrB beta-hairpin between the DNA strands. Then UvrB probes one DNA strand for the presence of a lesion. If a lesion is found the UvrA subunits dissociate and the UvrB-DNA preincision complex is formed. This complex is subsequently bound by UvrC and the second UvrB is released. If no lesion is found, the DNA wraps around the other UvrB subunit that will check the other stand for damage. The protein is UvrABC system protein B of Symbiobacterium thermophilum (strain DSM 24528 / JCM 14929 / IAM 14863 / T).